Consider the following 238-residue polypeptide: Hydatid disease diagnostic antigen P-29 (238 aa).

A BAR domain is found at 18 to 238; sequence GELVNKNEKT…AKECSMMLGE (221 aa).

The protein is Hydatid disease diagnostic antigen P-29 of Echinococcus granulosus (Hydatid tapeworm).